Here is a 359-residue protein sequence, read N- to C-terminus: tRNA-specific 2-thiouridylase MnmA (359 aa).

ATP contacts are provided by residues 9 to 16 and Met35; that span reads GMSGGVDS. The Nucleophile role is filled by Cys104. A disulfide bond links Cys104 and Cys200. Gly128 contacts ATP. The segment at 150-152 is interaction with tRNA; that stretch reads KDQ. The Cysteine persulfide intermediate role is filled by Cys200. The interaction with tRNA stretch occupies residues 306-307; it reads RY.

This sequence belongs to the MnmA/TRMU family.

Its subcellular location is the cytoplasm. The catalysed reaction is S-sulfanyl-L-cysteinyl-[protein] + uridine(34) in tRNA + AH2 + ATP = 2-thiouridine(34) in tRNA + L-cysteinyl-[protein] + A + AMP + diphosphate + H(+). Functionally, catalyzes the 2-thiolation of uridine at the wobble position (U34) of tRNA, leading to the formation of s(2)U34. This chain is tRNA-specific 2-thiouridylase MnmA, found in Clostridium perfringens (strain ATCC 13124 / DSM 756 / JCM 1290 / NCIMB 6125 / NCTC 8237 / Type A).